The primary structure comprises 105 residues: ATP-dependent Clp protease adapter protein ClpS (105 aa).

Belongs to the ClpS family. In terms of assembly, binds to the N-terminal domain of the chaperone ClpA.

Involved in the modulation of the specificity of the ClpAP-mediated ATP-dependent protein degradation. The sequence is that of ATP-dependent Clp protease adapter protein ClpS from Aeromonas hydrophila subsp. hydrophila (strain ATCC 7966 / DSM 30187 / BCRC 13018 / CCUG 14551 / JCM 1027 / KCTC 2358 / NCIMB 9240 / NCTC 8049).